We begin with the raw amino-acid sequence, 356 residues long: Glutamine synthetase cytosolic isozyme (356 aa).

In terms of domain architecture, GS beta-grasp spans 19–99 (IIAEYIWIGG…VMCDAYTPAG (81 aa)). Residues 38-66 (RTLPGPVTDPSQLPKWNYDGSSTGQAPGE) are disordered. The region spanning 106–356 (KRHAAAKIFS…IADTTILWKP (251 aa)) is the GS catalytic domain.

The protein belongs to the glutamine synthetase family. Homooctamer.

The protein localises to the cytoplasm. It carries out the reaction L-glutamate + NH4(+) + ATP = L-glutamine + ADP + phosphate + H(+). This chain is Glutamine synthetase cytosolic isozyme, found in Medicago sativa (Alfalfa).